The chain runs to 398 residues: Tear acid lipase-like protein (398 aa).

A signal peptide spans 1–19 (MSWLLSTMCLVHVCGNIFC). Catalysis depends on S170, which acts as the Nucleophile. C243 and C252 are disulfide-bonded. N268 is a glycosylation site (N-linked (GlcNAc...) asparagine). Catalysis depends on charge relay system residues D340 and H369.

The protein belongs to the AB hydrolase superfamily. Lipase family. Monomer. In terms of processing, N-glycosylated. As to expression, expressed in female lacrimal gland acinar cells from where it is secreted into tears (at protein level).

It is found in the secreted. Female-specific protein which lacks detectable lipase activity against a range of substrates. Binds the hydrophobic lipid 1-aminoanthracene with high affinity. The chain is Tear acid lipase-like protein from Mesocricetus auratus (Golden hamster).